We begin with the raw amino-acid sequence, 1196 residues long: Truncated transposon Ty1-A Gag-Pol polyprotein (1196 aa).

Residues 101-276 (NSYEPFQYLH…AGLDISTLLP (176 aa)) enclose the Integrase catalytic domain. 2 residues coordinate Mg(2+): D112 and D177. Disordered regions lie at residues 397 to 528 (SKAV…ETEK), 533 to 552 (RSPS…NIVP), and 571 to 628 (DLPL…DNET). The segment covering 401-410 (SPTDSTPPST) has biased composition (low complexity). The segment covering 446 to 456 (STPQISNIEST) has biased composition (polar residues). Basic and acidic residues predominate over residues 479–494 (ESSHASKSKDFRHSDS). 2 stretches are compositionally biased toward polar residues: residues 495 to 523 (YSEN…QISD) and 542 to 552 (PENNSSHNIVP). Positions 619–653 (KKRSLEDNETEIKVSRDTWNTKNMRSLEPPRSKKR) match the Bipartite nuclear localization signal motif. The 139-residue stretch at 779-917 (NNYYITQLDI…DILGLEIKYQ (139 aa)) folds into the Reverse transcriptase Ty1/copia-type domain. Positions 787, 868, 869, 1051, 1093, and 1126 each coordinate Mg(2+). The RNase H Ty1/copia-type domain maps to 1051-1193 (DASYGNQPYY…IKTFKLLTNK (143 aa)).

Initially, virus-like particles (VLPs) are composed of the structural unprocessed proteins Gag and Gag-Pol, and also contain the host initiator methionine tRNA (tRNA(i)-Met) which serves as a primer for minus-strand DNA synthesis, and a dimer of genomic Ty RNA. Processing of the polyproteins occurs within the particle and proceeds by an ordered pathway, called maturation. First, the protease (PR) is released by autocatalytic cleavage of the Gag-Pol polyprotein yielding capsid protein p45 and a Pol-p154 precursor protein. This cleavage is a prerequisite for subsequent processing of Pol-p154 at the remaining sites to release the mature structural and catalytic proteins. Maturation takes place prior to the RT reaction and is required to produce transposition-competent VLPs.

The protein localises to the cytoplasm. It localises to the nucleus. It catalyses the reaction DNA(n) + a 2'-deoxyribonucleoside 5'-triphosphate = DNA(n+1) + diphosphate. The catalysed reaction is Endonucleolytic cleavage to 5'-phosphomonoester.. Its function is as follows. Reverse transcriptase/ribonuclease H (RT) is a multifunctional enzyme that catalyzes the conversion of the retro-elements RNA genome into dsDNA within the VLP. The enzyme displays a DNA polymerase activity that can copy either DNA or RNA templates, and a ribonuclease H (RNase H) activity that cleaves the RNA strand of RNA-DNA heteroduplexes during plus-strand synthesis and hydrolyzes RNA primers. The conversion leads to a linear dsDNA copy of the retrotransposon that includes long terminal repeats (LTRs) at both ends. Integrase (IN) targets the VLP to the nucleus, where a subparticle preintegration complex (PIC) containing at least integrase and the newly synthesized dsDNA copy of the retrotransposon must transit the nuclear membrane. Once in the nucleus, integrase performs the integration of the dsDNA into the host genome. This is Truncated transposon Ty1-A Gag-Pol polyprotein (TY1B-A) from Saccharomyces cerevisiae (strain ATCC 204508 / S288c) (Baker's yeast).